The sequence spans 312 residues: Glyoxylate/hydroxypyruvate reductase A (312 aa).

Arg227 is an active-site residue. The active-site Proton donor is the His275.

Belongs to the D-isomer specific 2-hydroxyacid dehydrogenase family. GhrA subfamily.

The protein localises to the cytoplasm. The catalysed reaction is glycolate + NADP(+) = glyoxylate + NADPH + H(+). It carries out the reaction (R)-glycerate + NAD(+) = 3-hydroxypyruvate + NADH + H(+). The enzyme catalyses (R)-glycerate + NADP(+) = 3-hydroxypyruvate + NADPH + H(+). In terms of biological role, catalyzes the NADPH-dependent reduction of glyoxylate and hydroxypyruvate into glycolate and glycerate, respectively. This chain is Glyoxylate/hydroxypyruvate reductase A, found in Escherichia coli O17:K52:H18 (strain UMN026 / ExPEC).